The chain runs to 789 residues: Glycerol-3-phosphate acyltransferase (789 aa).

Residues 275-280 (SHRSYI) carry the HXXXXD motif motif.

Belongs to the GPAT/DAPAT family.

It localises to the cell membrane. The catalysed reaction is sn-glycerol 3-phosphate + an acyl-CoA = a 1-acyl-sn-glycero-3-phosphate + CoA. Its pathway is phospholipid metabolism; CDP-diacylglycerol biosynthesis; CDP-diacylglycerol from sn-glycerol 3-phosphate: step 1/3. This chain is Glycerol-3-phosphate acyltransferase, found in Mycobacterium bovis (strain BCG / Pasteur 1173P2).